Here is a 379-residue protein sequence, read N- to C-terminus: Chaperone protein DnaJ (379 aa).

In terms of domain architecture, J spans 5–70; the sequence is DYYELLEVSR…QKRAAYDQFG (66 aa). The CR-type zinc finger occupies 135 to 213; sequence GKEVEITVPR…CHGQGRVRES (79 aa). Zn(2+)-binding residues include Cys148, Cys151, Cys165, Cys168, Cys187, Cys190, Cys201, and Cys204. 4 CXXCXGXG motif repeats span residues 148–155, 165–172, 187–194, and 201–208; these read CTVCEGSG, CETCQGMG, CPTCHGEG, and CASCHGQG.

The protein belongs to the DnaJ family. In terms of assembly, homodimer. Requires Zn(2+) as cofactor.

It is found in the cytoplasm. Participates actively in the response to hyperosmotic and heat shock by preventing the aggregation of stress-denatured proteins and by disaggregating proteins, also in an autonomous, DnaK-independent fashion. Unfolded proteins bind initially to DnaJ; upon interaction with the DnaJ-bound protein, DnaK hydrolyzes its bound ATP, resulting in the formation of a stable complex. GrpE releases ADP from DnaK; ATP binding to DnaK triggers the release of the substrate protein, thus completing the reaction cycle. Several rounds of ATP-dependent interactions between DnaJ, DnaK and GrpE are required for fully efficient folding. Also involved, together with DnaK and GrpE, in the DNA replication of plasmids through activation of initiation proteins. The sequence is that of Chaperone protein DnaJ from Legionella pneumophila (strain Corby).